We begin with the raw amino-acid sequence, 377 residues long: Caspase-4 (377 aa).

A required for LPS-binding region spans residues M1–D59. Positions M1–D80 are excised as a propeptide. The 91-residue stretch at M1–N91 folds into the CARD domain. A2 is modified (N-acetylalanine). S83 bears the Phosphoserine mark. The tract at residues P84–D104 is disordered. Catalysis depends on residues H210 and C258. A propeptide spanning residues S271 to D289 is cleaved from the precursor. R314 is modified ((Microbial infection) ADP-riboxanated arginine).

Belongs to the peptidase C14A family. Heterotetramer that consists of two anti-parallel arranged heterodimers, each one formed by a 20 kDa (Caspase-4 subunit p20) and a 10 kDa (Caspase-4 subunit p10) subunit. Upon direct LPS-binding, forms large homooligomers, resulting in its activation. These oligomers are often referred to as 'non-canonical inflammasomes'. In its precursor form, interacts with TMEM214; this interaction is required for association with the endoplasmic reticulum membrane. Interacts with CASP1. Interacts with NOD2. Interacts with SERPINB1; this interaction regulates CASP4 activity. As to quaternary structure, heterotetramer that consists of two anti-parallel arranged heterodimers, each one formed by a 20 kDa (Caspase-4 subunit p20) and a 10 kDa (Caspase-4 subunit p10) subunit. In terms of assembly, (Microbial infection) Interacts with NleF protein from pathogenic E.coli; this interaction leads to enzyme inhibition. (Microbial infection) Interacts with cathepsin CTSG; the interaction is promoted by the Td92 surface protein of the periodontal pathogen T.denticola and leads to CASP4 activation. In terms of processing, in response to activation signals, undergoes autoproteolytic cleavage and activation. Post-translationally, (Microbial infection) ADP-riboxanation by S.flexneri OspC3 blocks CASP4 autoprocessing, preventing CASP4 activation and ability to recognize and cleave GSDMD, thereby thwarting the inflammasome/pyroptosis-mediated defense. As to expression, widely expressed, including in keratinocytes and colonic and small intestinal epithelial cells (at protein level). Not detected in brain.

Its subcellular location is the cytoplasm. The protein resides in the cytosol. It localises to the endoplasmic reticulum membrane. The protein localises to the mitochondrion. It is found in the inflammasome. Its subcellular location is the secreted. It carries out the reaction Strict requirement for Asp at the P1 position. It has a preferred cleavage sequence of Tyr-Val-Ala-Asp-|- but also cleaves at Asp-Glu-Val-Asp-|-.. Its activity is regulated as follows. Activated by homooligomerization induced by direct binding to cytosolic LPS, in a TLR4-independent manner. In addition to LPS, CASP4/CASP11 may also be activated by oxidized phospholipid 1-palmitoyl-2-arachidonoyl- sn-glycero-3-phosphorylcholine, an oxidized phospholipid (oxPAPC), in dendritic cells, promoting adaptive immunity. The role of oxPAPC is however unclear and another report suggests that oxPAPC competes with LPS-binding and inhibits the non-canonical inflammasome in macrophages. In terms of biological role, inflammatory caspase that acts as the effector of the non-canonical inflammasome by mediating lipopolysaccharide (LPS)-induced pyroptosis. Also indirectly activates the NLRP3 and NLRP6 inflammasomes. Acts as a thiol protease that cleaves a tetrapeptide after an Asp residue at position P1: catalyzes cleavage of CGAS, GSDMD and IL18. Effector of the non-canonical inflammasome independently of NLRP3 inflammasome and CASP1: the non-canonical inflammasome promotes pyroptosis through GSDMD cleavage without involving secretion of cytokine IL1B. In the non-canonical inflammasome, CASP4 is activated by direct binding to the lipid A moiety of LPS without the need of an upstream sensor. LPS-binding promotes CASP4 activation and CASP4-mediated cleavage of GSDMD and IL18, followed by IL18 secretion through the GSDMD pore, pyroptosis of infected cells and their extrusion into the gut lumen. Also indirectly promotes secretion of mature cytokines (IL1A and HMGB1) downstream of GSDMD-mediated pyroptosis via activation of the NLRP3 and NLRP6 inflammasomes. Involved in NLRP3-dependent CASP1 activation and IL1B secretion in response to non-canonical activators, such as UVB radiation or cholera enterotoxin. Involved in NLRP6 inflammasome-dependent activation in response to lipoteichoic acid (LTA), a cell-wall component of Gram-positive bacteria, which leads to CASP1 activation and IL1B secretion. Involved in LPS-induced IL6 secretion; this activity may not require caspase enzymatic activity. The non-canonical inflammasome is required for innate immunity to cytosolic, but not vacuolar, bacteria. Plays a crucial role in the restriction of S.typhimurium replication in colonic epithelial cells during infection. Activation of the non-canonical inflammasome in brain endothelial cells can lead to excessive pyroptosis, leading to blood-brain barrier breakdown. Pyroptosis limits bacterial replication, while cytokine secretion promotes the recruitment and activation of immune cells and triggers mucosal inflammation. May also act as an activator of adaptive immunity in dendritic cells, following activation by oxidized phospholipid 1-palmitoyl-2-arachidonoyl- sn-glycero-3-phosphorylcholine, an oxidized phospholipid (oxPAPC). Involved in cell death induced by endoplasmic reticulum stress and by treatment with cytotoxic APP peptides found in Alzheimer's patient brains. Cleavage of GSDMD is not strictly dependent on the consensus cleavage site but depends on an exosite interface on CASP4 that recognizes and binds the Gasdermin-D, C-terminal (GSDMD-CT) part. Catalyzes cleavage and maturation of IL18; IL18 processing also depends of the exosite interface on CASP4. In contrast, it does not directly process IL1B. During non-canonical inflammasome activation, cuts CGAS and may play a role in the regulation of antiviral innate immune activation. (Microbial infection) In response to the Td92 surface protein of the periodontal pathogen T.denticola, activated by cathepsin CTSG which leads to production and secretion of IL1A and pyroptosis of gingival fibroblasts. The chain is Caspase-4 from Homo sapiens (Human).